Here is a 176-residue protein sequence, read N- to C-terminus: Large ribosomal subunit protein uL10 (176 aa).

The protein belongs to the universal ribosomal protein uL10 family. In terms of assembly, part of the ribosomal stalk of the 50S ribosomal subunit. The N-terminus interacts with L11 and the large rRNA to form the base of the stalk. The C-terminus forms an elongated spine to which L12 dimers bind in a sequential fashion forming a multimeric L10(L12)X complex.

Forms part of the ribosomal stalk, playing a central role in the interaction of the ribosome with GTP-bound translation factors. This chain is Large ribosomal subunit protein uL10, found in Streptomyces avermitilis (strain ATCC 31267 / DSM 46492 / JCM 5070 / NBRC 14893 / NCIMB 12804 / NRRL 8165 / MA-4680).